The following is a 316-amino-acid chain: Transaldolase (316 aa).

Lys-127 acts as the Schiff-base intermediate with substrate in catalysis.

This sequence belongs to the transaldolase family. Type 2 subfamily.

The protein localises to the cytoplasm. The enzyme catalyses D-sedoheptulose 7-phosphate + D-glyceraldehyde 3-phosphate = D-erythrose 4-phosphate + beta-D-fructose 6-phosphate. It functions in the pathway carbohydrate degradation; pentose phosphate pathway; D-glyceraldehyde 3-phosphate and beta-D-fructose 6-phosphate from D-ribose 5-phosphate and D-xylulose 5-phosphate (non-oxidative stage): step 2/3. Its function is as follows. Transaldolase is important for the balance of metabolites in the pentose-phosphate pathway. The sequence is that of Transaldolase (tal) from Helicobacter pylori (strain ATCC 700392 / 26695) (Campylobacter pylori).